Reading from the N-terminus, the 177-residue chain is Large ribosomal subunit protein uL6 (177 aa).

Belongs to the universal ribosomal protein uL6 family. Part of the 50S ribosomal subunit.

This protein binds to the 23S rRNA, and is important in its secondary structure. It is located near the subunit interface in the base of the L7/L12 stalk, and near the tRNA binding site of the peptidyltransferase center. The sequence is that of Large ribosomal subunit protein uL6 from Vibrio vulnificus (strain CMCP6).